A 183-amino-acid chain; its full sequence is Large ribosomal subunit protein bL17 (183 aa).

Basic and acidic residues predominate over residues 130 to 150 (GTKFAKDEKAKAEATEAKAEE). Residues 130–183 (GTKFAKDEKAKAEATEAKAEETTETTESTEAESTEAPAEEAKAEDTAAEKKDES) form a disordered region. Positions 151-162 (TTETTESTEAES) are enriched in acidic residues. Positions 168-183 (EEAKAEDTAAEKKDES) are enriched in basic and acidic residues.

This sequence belongs to the bacterial ribosomal protein bL17 family. Part of the 50S ribosomal subunit. Contacts protein L32.

This chain is Large ribosomal subunit protein bL17, found in Saccharopolyspora erythraea (strain ATCC 11635 / DSM 40517 / JCM 4748 / NBRC 13426 / NCIMB 8594 / NRRL 2338).